The primary structure comprises 498 residues: ATP synthase subunit alpha 1 (498 aa).

164–171 (GNRQSGKT) contacts ATP.

Belongs to the ATPase alpha/beta chains family. F-type ATPases have 2 components, CF(1) - the catalytic core - and CF(0) - the membrane proton channel. CF(1) has five subunits: alpha(3), beta(3), gamma(1), delta(1), epsilon(1). CF(0) has three main subunits: a(1), b(2) and c(9-12). The alpha and beta chains form an alternating ring which encloses part of the gamma chain. CF(1) is attached to CF(0) by a central stalk formed by the gamma and epsilon chains, while a peripheral stalk is formed by the delta and b chains.

The protein localises to the cell membrane. It catalyses the reaction ATP + H2O + 4 H(+)(in) = ADP + phosphate + 5 H(+)(out). Functionally, produces ATP from ADP in the presence of a proton gradient across the membrane. The alpha chain is a regulatory subunit. The polypeptide is ATP synthase subunit alpha 1 (Listeria welshimeri serovar 6b (strain ATCC 35897 / DSM 20650 / CCUG 15529 / CIP 8149 / NCTC 11857 / SLCC 5334 / V8)).